Consider the following 395-residue polypeptide: GPI-anchor transamidase (395 aa).

A signal peptide spans 1-27; it reads MVGTWFLCRGFTTLAGLLLLPFGSLAA. At 28-368 the chain is on the lumenal side; sequence SQIEDQAEQF…PKLKDWHPPG (341 aa). Positions 79, 82, 118, and 120 each coordinate Ca(2+). Catalysis depends on histidine 164, which acts as the Proton donor. Cysteine 206 serves as the catalytic Nucleophile; acyl-thioester intermediate. Residues cysteine 206, serine 232, and serine 234 each contribute to the a protein site. The interval 231 to 236 is autoinhibitory loop; sequence DSLSHQ. The cysteines at positions 275 and 280 are disulfide-linked. A helical transmembrane segment spans residues 369–385; it reads GFILGLWALIIMVFFKT. The Cytoplasmic portion of the chain corresponds to 386–395; it reads YGIKHMKFIF.

Belongs to the peptidase C13 family. In terms of assembly, heteropentamer. Part of the GPI-anchor transamidase complex, consisting of PIGK, PIGT, PIGS, PIGU and GAA1. Interacts with GPAA1. Interacts with PIGT; this interaction, via a disulfide link, stabilizes the expression of GAA1 and PIGK and links them to PIGS. The disulfide bond between PIGK/GPI8 and PIGT is important for normal enzyme activity.

The protein localises to the endoplasmic reticulum membrane. Its pathway is glycolipid biosynthesis; glycosylphosphatidylinositol-anchor biosynthesis. Its activity is regulated as follows. In the absence of proproteins substrates, exists in an inactive state with a disrupted catalytic site by an autoinhibitory loop. The binding of proprotein substrates, particularly the CSP region, to GPI-T triggers concerted conformational changes that alleviate the inhibition by the autoinhibitory loop. Meanwhile, proprotein residues near the omega- site induce the formation of a catalytic cleft for catalysis, following which the products are released and GPI-T reverts to the inactive state. Functionally, catalytic subunit of the glycosylphosphatidylinositol-anchor (GPI-anchor) transamidase (GPI-T) complex that catalyzes the formation of the linkage between a proprotein and a GPI-anchor and participates in GPI anchored protein biosynthesis. Recognizes diverse proproteins at a C-terminal signal peptide (CSP) region that lacks consensus sequence and replaces it with a GPI-anchor via a transamidation reaction. Transamidation catalysis reaction follows a two-phase mechanism. In the acyl-enzyme phase, the carbonyl group of the proproteins's omega-site undergoes a nucleophilic attack forming an enzyme-substrate thioester bond. Followed by a general acid catalysis that allows CSP releasing, regenerating the carbonyl, and forming the acyl-enzyme intermediate. In the GPI-anchor attachment phase, the amino group of the GPI-anchor's ethanolamine phosphate, the one on third mannose (EtNP3), mediates a nucleophilic attack on the carbonyl of the acyl-enzyme intermediate, replacing the CSP, allowing GPI-anchor attachment to the omega-residue, therefore forming the product and freeing the enzyme. The protein is GPI-anchor transamidase of Sus scrofa (Pig).